The following is a 39-amino-acid chain: Cecropin (39 aa).

Its subcellular location is the secreted. Antibacterial peptide active against Gram-negative bacterium E.coli. Has no activity against Gram-positive bacterium M.luteus. Weakly active against M.luteus. This is Cecropin from Calliphora vicina (Blue blowfly).